A 787-amino-acid polypeptide reads, in one-letter code: MDASLEKKIADPTLAEMGKNLKEAMKMLEDSQRRTEEENGKKLLSGDIPGPLQGSGQDMVSILQLVQNLMHGDEDEQPQSTRIQNIGEQGHISLLGHSLGAYISTLDKEKLRKLTTRILSDTTLWLCRIFRYENGCAYFHEEEREGLAKICRLAIHSRYEDFVVDGFNVLYNRKPVLYLSAAARPGLGQYLCNQLGLPFPCLCRVPCNTVFGSQHQMDVAFLEKLIKDDIERGKLPLLLVANAGTAAVGHTDKIGRLKEVCEQYGIWLHVEGVNLATLALGYVSSSVLAATKCDSMTLTPGPWLGLPAVPAVTLYKHDDPALTLVSGLTSNKPADKLRALPLWLSLQYLGLDGIVERIKHACQLSQRLQESLKKVNHIKILVEDELSSPVVVFRFFQELPGSDPGLNAIPAPSAAASAVGRERHSCDALNRWLGEQLKQLVPMSGLTVMDLEVEGTCVRFSPLMTAAVLGTRGEDVDQLVACVQSKLPVLTCTLQLREEFKQEVEATAGLLYVDDPNWPGIGVVRYEHANDDKSSLKLDPEGEKIHAGLLKKLNELESDLTFKMGPEYKSMKSCIYIGMASDDIDISELVETIAVTAREIEEDSRLLENMTEVVRKGIQEAQVQLQKANEERLLEEGVLRQIPVVGSVLNWFSPVQASQKGRTFNLTAGSLESTEHTYVYKVQGSGVTPPQTPTGTRTKQRLPGQKPFKRSLRGSDAISETSSVGHIEDLEKMEQSSGGQEASEANSHERHPEAPAPPEAEPPGALQDGAQGLQDDRPQVEEPESLR.

The span at 29–41 (EDSQRRTEEENGK) shows a compositional bias: basic and acidic residues. Residues 29-52 (EDSQRRTEEENGKKLLSGDIPGPL) are disordered. The residue at position 653 (Ser653) is a Phosphoserine. Residues 683 to 787 (QGSGVTPPQT…PQVEEPESLR (105 aa)) form a disordered region. Polar residues predominate over residues 685–697 (SGVTPPQTPTGTR). Phosphothreonine occurs at positions 688 and 692. Ser711, Ser719, and Ser723 each carry phosphoserine. Residues 735-745 (QSSGGQEASEA) show a composition bias toward polar residues. Phosphoserine occurs at positions 747 and 785. Basic and acidic residues predominate over residues 774 to 787 (QDDRPQVEEPESLR).

It belongs to the group II decarboxylase family. Requires pyridoxal 5'-phosphate as cofactor.

The chain is Pyridoxal-dependent decarboxylase domain-containing protein 1 (PDXDC1) from Bos taurus (Bovine).